The following is a 447-amino-acid chain: Probable glycine dehydrogenase (decarboxylating) subunit 1 (447 aa).

Belongs to the GcvP family. N-terminal subunit subfamily. In terms of assembly, the glycine cleavage system is composed of four proteins: P, T, L and H. In this organism, the P 'protein' is a heterodimer of two subunits.

The enzyme catalyses N(6)-[(R)-lipoyl]-L-lysyl-[glycine-cleavage complex H protein] + glycine + H(+) = N(6)-[(R)-S(8)-aminomethyldihydrolipoyl]-L-lysyl-[glycine-cleavage complex H protein] + CO2. The glycine cleavage system catalyzes the degradation of glycine. The P protein binds the alpha-amino group of glycine through its pyridoxal phosphate cofactor; CO(2) is released and the remaining methylamine moiety is then transferred to the lipoamide cofactor of the H protein. This chain is Probable glycine dehydrogenase (decarboxylating) subunit 1, found in Macrococcus caseolyticus (strain JCSC5402) (Macrococcoides caseolyticum).